A 1365-amino-acid chain; its full sequence is MEVLMAKGANLVFHNKVIDGIAMKRLISRFIDHFGMAYTSHILDQVKTLGFQQATATSISLGIDDLLTIPSKGWLVQDAEQQSFILEKQHHYGNIHAVEKLRQSIEIWYATSEHLRQEMNPNFRMTDPYNPVHMMSFSGARGNASQVHQLVGMRGLMSDPQGQMIDLPIQSNLREGLSLTEYIISCYGARKGVVDTAVRTSDAGYLTRRLVEVVQHVVVRRRDCGTTRGISVSPQTGTIPEILFIQTLIGRVLADDIYKGPRCIAARNQDIGVGLVNRLITFRVQTISIRTPFTCRSTSWICRLCYGRSPTHGDLVELGEAVGIIAGQSIGEPGTQLTLRTFHTGGVFTGGTAVHVRAPSNGKIKFNEDLVHPTRTRHGHPAFLCYIDLAVTIESEDIIHNVNIPPKSFLLVQKDQYVESEQVIAEIRAGTSTLNFKEKVRKHIYSDSQGEMHWSTDVDHAPEFTYGNVHLLPKTSHLWILAGRPHKSRVATRSLHKDQDQTNAHFLSVEQRYISNSSVINAYMRHTFFSSDLSSTNSNKGDSISDYSERKRIVRTRHSNLIYPAKNSYLLGKRRRNRFMTTFQSIQELEKELRAPSGISIDIPLNGSFRRNSILAYFDDPRYRRESAGITKYGTIEAHSIKKKEGLIEYRGVNEFRAKYQMQVDRFFFIPEEVHILPRSSAIMVRNNSIIGVDTQITLTTRSRVGGLVRVEKKKKKIGLKIFSGNIHFPGKTDKISRHRGILIPPGRGQTKLKNWSYVQRITPTKKRYFVLIRPAITYEITDGISLSTLFPQDLLQERDKVQLRVVNYILSGNGKPIRGISDTSIQLVRTCLVLNWDHDKKSSSIEESRASFVEVKTNDMMRDFLRIDLVKSTISYAGKRNDPSGSGLLSDNESDRMNPFYSIYIYSKARLQQPFSQNNETVRTLLNRTKEFQSFIILSSANCFRMGPFKGLKYYKELDPIIPIKNSSGPFGTSLQIANFYSFYRLITQDKILVTNYLQLDNLKQTFWVMKYYFIDDNRKIYNPDPVSNIVLNSFKLNWYCLHHNYYEETSARMGLGQFLCENVCLAKNGPRLKAGQVLIVQVDSVVIRAAKPYLATPGATVHGHYGEIIYEGDTLVTFIYEKSRSGDITQGLPKVEQVLEVRSLESISMNLERRIDAWNERITGILGLPWGFVVGAELTIVQSRISLVNKIQKVYRSQGVQIHNRHLEIIVHQITSKVLVSEDGMSNVFLPGELIGLLRAERTGRALEEVISYRAVLVGITRASLNTHSFISEASFQETARVLAKAALRGRIDWLKGLKENVVLGGKIPVGTGFKGLVHPSSQHKSIPLKNKKKNLFEGEINDILFYYREFFNIEFLCFKNYQ.

Positions 224, 295, 302, and 305 each coordinate Zn(2+).

This sequence belongs to the RNA polymerase beta' chain family. RpoC2 subfamily. In terms of assembly, in plastids the minimal PEP RNA polymerase catalytic core is composed of four subunits: alpha, beta, beta', and beta''. When a (nuclear-encoded) sigma factor is associated with the core the holoenzyme is formed, which can initiate transcription. Zn(2+) serves as cofactor.

The protein resides in the plastid. The protein localises to the chloroplast. The enzyme catalyses RNA(n) + a ribonucleoside 5'-triphosphate = RNA(n+1) + diphosphate. Functionally, DNA-dependent RNA polymerase catalyzes the transcription of DNA into RNA using the four ribonucleoside triphosphates as substrates. The sequence is that of DNA-directed RNA polymerase subunit beta'' from Fagopyrum esculentum subsp. ancestrale (Wild buckwheat).